Consider the following 321-residue polypeptide: Mas-related G-protein coupled receptor member D (321 aa).

Residues 1 to 8 (MNSTLDSS) are Extracellular-facing. Asparagine 2 carries N-linked (GlcNAc...) asparagine glycosylation. A helical transmembrane segment spans residues 9–29 (PAPGLTISPTMDLVTWIYFSV). Position 30 (threonine 30) is a topological domain, cytoplasmic. A helical transmembrane segment spans residues 31–51 (FLAMATCVGGMAGNSLVIWLL). The Extracellular portion of the chain corresponds to 52–72 (SCNGMQRSPFCVYVLNLAVAD). Residues 73–93 (FLFLFCMASMLSLETGPLLIV) form a helical membrane-spanning segment. The Cytoplasmic segment spans residues 94 to 146 (NISAKIYEGMRRIKYFAYTAGLSLLTAISTQRCLSVLFPIWYKCHRPRHLSSV). The chain crosses the membrane as a helical span at residues 147–167 (VSGALWALAFLMNFLASFFCV). At 168–181 (QFWHPNKHQCFKVD) the chain is on the extracellular side. Residues 182-202 (IVFNSLILGIFMPVMILTSTI) form a helical membrane-spanning segment. Residues 203 to 220 (LFIRVRKNSLMQRRRPRR) are Cytoplasmic-facing. The helical transmembrane segment at 221-241 (LYVVILTSILVFLTCSLPLGI) threads the bilayer. Residues 242-260 (NWFLLYWVDVKRDVRLLYS) are Extracellular-facing. Residues 261-281 (CVSRFSSSLSSSANPVIYFLV) traverse the membrane as a helical segment. Residues 282-321 (GSQKSHRLQESLGAVLGRALRDEPEPEGRETPSTCTNDGV) lie on the Cytoplasmic side of the membrane. Residues 302 to 311 (RDEPEPEGRE) are compositionally biased toward basic and acidic residues. Positions 302–321 (RDEPEPEGRETPSTCTNDGV) are disordered. Residues 312–321 (TPSTCTNDGV) are compositionally biased toward polar residues.

It belongs to the G-protein coupled receptor 1 family. Mas subfamily. Expressed in a subset of sensory neurons that includes nociceptors. Expressed in the subclass of non-peptidergic sensory neurons that are IB4(+) and VR1(-).

The protein localises to the cell membrane. Functionally, may regulate nociceptor function and/or development, including the sensation or modulation of pain. Functions as a specific membrane receptor for beta-alanine. The receptor couples with G-protein G(q) and G(i). The protein is Mas-related G-protein coupled receptor member D (Mrgprd) of Mus musculus (Mouse).